The primary structure comprises 313 residues: Fe-S cluster assembly protein DRE2 (313 aa).

The interval 1–184 is N-terminal SAM-like domain; the sequence is MTLRILLLLH…KKLLDRSNEV (184 aa). Over residues 134–144 the composition is skewed to low complexity; the sequence is NITSNSNNNDS. 3 disordered regions span residues 134–155, 187–254, and 271–313; these read NITS…NNTG, NLAS…QEDN, and NLII…RQSG. The segment at 185 to 270 is linker; that stretch reads KGNLASGTVK…NDLISELKSD (86 aa). A compositionally biased stretch (polar residues) spans 189-207; it reads ASGTVKSPSPGLTDTSAQN. Over residues 233 to 254 the composition is skewed to acidic residues; the sequence is SDSDNNEGRDLDDDDDDGQEDN.

Belongs to the anamorsin family. Monomer. Interacts with TAH18. Interacts with MIA40.

The protein resides in the cytoplasm. The protein localises to the mitochondrion intermembrane space. Its function is as follows. Component of the cytosolic iron-sulfur (Fe-S) protein assembly (CIA) machinery required for the maturation of extramitochondrial Fe-S proteins. Part of an electron transfer chain functioning in an early step of cytosolic Fe-S biogenesis, facilitating the de novo assembly of a [4Fe-4S] cluster on the scaffold complex CFD1-NBP35. Electrons are transferred to DRE2 from NADPH via the FAD- and FMN-containing protein TAH18. TAH18-DRE2 are also required for the assembly of the diferric tyrosyl radical cofactor of ribonucleotide reductase (RNR), probably by providing electrons for reduction during radical cofactor maturation in the catalytic small subunit RNR2. The sequence is that of Fe-S cluster assembly protein DRE2 (DRE2) from Lodderomyces elongisporus (strain ATCC 11503 / CBS 2605 / JCM 1781 / NBRC 1676 / NRRL YB-4239) (Yeast).